Here is a 250-residue protein sequence, read N- to C-terminus: Small ribosomal subunit protein uS2 (250 aa).

This sequence belongs to the universal ribosomal protein uS2 family.

In Paracidovorax citrulli (strain AAC00-1) (Acidovorax citrulli), this protein is Small ribosomal subunit protein uS2.